The primary structure comprises 262 residues: Small ribosomal subunit protein uS3 (262 aa).

Residues 38 to 106 (LRKIIAKELE…KVKLNIQEIH (69 aa)) enclose the KH type-2 domain. Residues 211 to 262 (KGQTQLPQPAVAAARPGLTVEEEERPQRKGGRGGRGANAGAARGGRGGRSRS) are disordered. Positions 243 to 255 (GGRGANAGAARGG) are enriched in gly residues.

The protein belongs to the universal ribosomal protein uS3 family. In terms of assembly, part of the 30S ribosomal subunit. Forms a tight complex with proteins S10 and S14.

In terms of biological role, binds the lower part of the 30S subunit head. Binds mRNA in the 70S ribosome, positioning it for translation. The sequence is that of Small ribosomal subunit protein uS3 from Roseiflexus sp. (strain RS-1).